A 483-amino-acid chain; its full sequence is ATP synthase subunit beta (483 aa).

Position 167 to 174 (167 to 174 (GGAGVGKT)) interacts with ATP.

This sequence belongs to the ATPase alpha/beta chains family. As to quaternary structure, F-type ATPases have 2 components, CF(1) - the catalytic core - and CF(0) - the membrane proton channel. CF(1) has five subunits: alpha(3), beta(3), gamma(1), delta(1), epsilon(1). CF(0) has three main subunits: a(1), b(2) and c(9-12). The alpha and beta chains form an alternating ring which encloses part of the gamma chain. CF(1) is attached to CF(0) by a central stalk formed by the gamma and epsilon chains, while a peripheral stalk is formed by the delta and b chains.

Its subcellular location is the cell membrane. It catalyses the reaction ATP + H2O + 4 H(+)(in) = ADP + phosphate + 5 H(+)(out). Its function is as follows. Produces ATP from ADP in the presence of a proton gradient across the membrane. The catalytic sites are hosted primarily by the beta subunits. The polypeptide is ATP synthase subunit beta (Paenarthrobacter aurescens (strain TC1)).